Here is a 382-residue protein sequence, read N- to C-terminus: S-adenosylmethionine synthase (382 aa).

His-16 serves as a coordination point for ATP. Asp-18 is a binding site for Mg(2+). Glu-44 serves as a coordination point for K(+). L-methionine contacts are provided by Glu-57 and Gln-100. The tract at residues 100–110 (QSADIAMGVDE) is flexible loop. ATP is bound by residues 165–167 (DAK), Asp-240, 246–247 (RK), Ala-263, and Lys-267. Asp-240 provides a ligand contact to L-methionine. Lys-271 is a binding site for L-methionine.

It belongs to the AdoMet synthase family. As to quaternary structure, homotetramer; dimer of dimers. The cofactor is Mg(2+). Requires K(+) as cofactor.

It is found in the cytoplasm. It catalyses the reaction L-methionine + ATP + H2O = S-adenosyl-L-methionine + phosphate + diphosphate. The protein operates within amino-acid biosynthesis; S-adenosyl-L-methionine biosynthesis; S-adenosyl-L-methionine from L-methionine: step 1/1. Functionally, catalyzes the formation of S-adenosylmethionine (AdoMet) from methionine and ATP. The overall synthetic reaction is composed of two sequential steps, AdoMet formation and the subsequent tripolyphosphate hydrolysis which occurs prior to release of AdoMet from the enzyme. This is S-adenosylmethionine synthase from Saccharophagus degradans (strain 2-40 / ATCC 43961 / DSM 17024).